Here is a 175-residue protein sequence, read N- to C-terminus: MKAQPIRAAVRIIGIDPGLRRTGWGVIESEGNRLIYVGCGSVEPPDDLPLANRLLAIHEGLAKVLNDFQPLEAAVEQTFVNKDGVATLKLGQARGIAMLAPAMFGISVAEYAPNQVKKTVVGAGHADKGQIAVMLKILLPKAEPPSADAADALAIAITHAHHRQGQALRMKVAGL.

Active-site residues include aspartate 16, glutamate 76, and aspartate 148. Mg(2+)-binding residues include aspartate 16, glutamate 76, and aspartate 148.

Belongs to the RuvC family. As to quaternary structure, homodimer which binds Holliday junction (HJ) DNA. The HJ becomes 2-fold symmetrical on binding to RuvC with unstacked arms; it has a different conformation from HJ DNA in complex with RuvA. In the full resolvosome a probable DNA-RuvA(4)-RuvB(12)-RuvC(2) complex forms which resolves the HJ. It depends on Mg(2+) as a cofactor.

The protein resides in the cytoplasm. It catalyses the reaction Endonucleolytic cleavage at a junction such as a reciprocal single-stranded crossover between two homologous DNA duplexes (Holliday junction).. Functionally, the RuvA-RuvB-RuvC complex processes Holliday junction (HJ) DNA during genetic recombination and DNA repair. Endonuclease that resolves HJ intermediates. Cleaves cruciform DNA by making single-stranded nicks across the HJ at symmetrical positions within the homologous arms, yielding a 5'-phosphate and a 3'-hydroxyl group; requires a central core of homology in the junction. The consensus cleavage sequence is 5'-(A/T)TT(C/G)-3'. Cleavage occurs on the 3'-side of the TT dinucleotide at the point of strand exchange. HJ branch migration catalyzed by RuvA-RuvB allows RuvC to scan DNA until it finds its consensus sequence, where it cleaves and resolves the cruciform DNA. This is Crossover junction endodeoxyribonuclease RuvC from Bradyrhizobium sp. (strain BTAi1 / ATCC BAA-1182).